The primary structure comprises 939 residues: U3 small nucleolar RNA-associated protein 21 (939 aa).

Ser-2 carries the post-translational modification N-acetylserine. WD repeat units follow at residues 40–71 (ATGT…LLFV), 81–111 (VALS…HLLE), 119–158 (EHLC…TKLT), 168–201 (VSLQ…LVFT), 208–245 (QITT…RTIK), 252–287 (SSLS…IHVL), 295–347 (YGGV…RSRG), 354–388 (SYIA…QSQE), 415–454 (VALA…GRWT), 463–497 (VKSV…LRKK), 505–541 (VTGI…GKLK), 546–581 (ITAM…VRQL), 583–624 (GHSN…DGII), and 626–664 (DNVA…KTVS). Position 772 is a phosphoserine (Ser-772).

Interacts with snoRNA U3. Interacts with MPP10. Interacts (via WD repeats) with UTP18. Component of the ribosomal small subunit (SSU) processome composed of at least 40 protein subunits and snoRNA U3.

It localises to the nucleus. The protein resides in the nucleolus. In terms of biological role, involved in nucleolar processing of pre-18S ribosomal RNA and ribosome assembly. This Saccharomyces cerevisiae (strain ATCC 204508 / S288c) (Baker's yeast) protein is U3 small nucleolar RNA-associated protein 21 (UTP21).